The primary structure comprises 314 residues: tRNA dimethylallyltransferase (314 aa).

G13 to T20 contributes to the ATP binding site. T15–T20 is a binding site for substrate. The interaction with substrate tRNA stretch occupies residues D38–Q41.

The protein belongs to the IPP transferase family. In terms of assembly, monomer. It depends on Mg(2+) as a cofactor.

The catalysed reaction is adenosine(37) in tRNA + dimethylallyl diphosphate = N(6)-dimethylallyladenosine(37) in tRNA + diphosphate. Catalyzes the transfer of a dimethylallyl group onto the adenine at position 37 in tRNAs that read codons beginning with uridine, leading to the formation of N6-(dimethylallyl)adenosine (i(6)A). This Bacillus licheniformis (strain ATCC 14580 / DSM 13 / JCM 2505 / CCUG 7422 / NBRC 12200 / NCIMB 9375 / NCTC 10341 / NRRL NRS-1264 / Gibson 46) protein is tRNA dimethylallyltransferase.